Here is a 132-residue protein sequence, read N- to C-terminus: Small ribosomal subunit protein uS8 (132 aa).

The protein belongs to the universal ribosomal protein uS8 family. In terms of assembly, part of the 30S ribosomal subunit. Contacts proteins S5 and S12.

Functionally, one of the primary rRNA binding proteins, it binds directly to 16S rRNA central domain where it helps coordinate assembly of the platform of the 30S subunit. The protein is Small ribosomal subunit protein uS8 of Mycoplasmopsis pulmonis (strain UAB CTIP) (Mycoplasma pulmonis).